We begin with the raw amino-acid sequence, 179 residues long: Large ribosomal subunit protein uL5 (179 aa).

This sequence belongs to the universal ribosomal protein uL5 family. As to quaternary structure, part of the 50S ribosomal subunit; part of the 5S rRNA/L5/L18/L25 subcomplex. Contacts the 5S rRNA and the P site tRNA. Forms a bridge to the 30S subunit in the 70S ribosome.

Its function is as follows. This is one of the proteins that bind and probably mediate the attachment of the 5S RNA into the large ribosomal subunit, where it forms part of the central protuberance. In the 70S ribosome it contacts protein S13 of the 30S subunit (bridge B1b), connecting the 2 subunits; this bridge is implicated in subunit movement. Contacts the P site tRNA; the 5S rRNA and some of its associated proteins might help stabilize positioning of ribosome-bound tRNAs. This Neisseria meningitidis serogroup C (strain 053442) protein is Large ribosomal subunit protein uL5.